The chain runs to 396 residues: Phosphoglycerate kinase (396 aa).

Substrate-binding positions include 21–23 (DLN), R36, 59–62 (HLGR), R113, and R146. Residues K197, E319, and 345-348 (GGDT) each bind ATP.

Belongs to the phosphoglycerate kinase family. Monomer.

The protein localises to the cytoplasm. The enzyme catalyses (2R)-3-phosphoglycerate + ATP = (2R)-3-phospho-glyceroyl phosphate + ADP. It functions in the pathway carbohydrate degradation; glycolysis; pyruvate from D-glyceraldehyde 3-phosphate: step 2/5. The protein is Phosphoglycerate kinase of Legionella pneumophila (strain Lens).